Reading from the N-terminus, the 177-residue chain is Alpha-crystallin A chain (177 aa).

Methionine 1 bears the N-acetylmethionine mark. In terms of domain architecture, sHSP spans 52 to 162 (VFRNFLDSGI…NWQDRPIPVS (111 aa)). Zn(2+)-binding residues include histidine 100 and glutamate 102. Cysteine 131 and cysteine 142 are disulfide-bonded. The tract at residues 146 to 177 (TRPGDDSNWQDRPIPVSREEKQGTQPEIRADP) is disordered. O-linked (GlcNAc) serine glycosylation is present at serine 162. Basic and acidic residues predominate over residues 162–177 (SREEKQGTQPEIRADP).

It belongs to the small heat shock protein (HSP20) family. Heteropolymer composed of three CRYAA and one CRYAB subunits. Inter-subunit bridging via zinc ions enhances stability, which is crucial as there is no protein turn over in the lens. Can also form homodimers and homotetramers (dimers of dimers) which serve as the building blocks of homooligomers.

It localises to the cytoplasm. It is found in the nucleus. Functionally, contributes to the transparency and refractive index of the lens. May act as a chaperone, preventing aggregation of various proteins under a wide range of stress conditions. This chain is Alpha-crystallin A chain (cryaa), found in Squalus acanthias (Spiny dogfish).